Consider the following 29-residue polypeptide: Cyclotide mela-7 (29 aa).

Positions 1–29 form a cross-link, cyclopeptide (Gly-Asn); that stretch reads GLPTCGETCFKGKCYTPGCSCSYPICKKN. Cystine bridges form between C5-C19, C9-C21, and C14-C26.

Post-translationally, this is a cyclic peptide. In terms of processing, contains 3 disulfide bonds.

Functionally, probably participates in a plant defense mechanism (Potential). Binds to and induces leakage in phospholipd membranes, particularly ones containing 1-palmitoyl-2-oleophosphatidylethanolamine (POPE). In vitro, displays cytotoxicity against cultured cells but no hemolytic activity towards fresh erythrocytes. Not active against Gram-negative bacterium E.coli ATCC 25922 or Gram-positive bacterium S.aureus ATCC 25923 up to a concentration of 64 uM. This Melicytus latifolius (Norfolk Island mahoe) protein is Cyclotide mela-7.